Here is a 152-residue protein sequence, read N- to C-terminus: MSCLPVLLLLQLLVSPGLQAPMTQTTSLKTSWVNCSNMIDEIITHLKQPPLPLLDFNNLNGEDQDILMENNLRRPNLEAFNKAVKSLQNASAIESILKNLPPCLPMATAAPTRHPIRIKDGDWNEFRRKLKFYLKTLENEQAQQMTLSLEIS.

Residues 1-19 (MSCLPVLLLLQLLVSPGLQ) form the signal peptide. Asn34 and Asn89 each carry an N-linked (GlcNAc...) asparagine glycan. Residues Cys35 and Cys103 are joined by a disulfide bond.

The protein belongs to the IL-3 family. As to quaternary structure, monomer. As to expression, activated T-cells, mast cells, natural killer cells.

The protein localises to the secreted. Functionally, granulocyte/macrophage colony-stimulating factors are cytokines that act in hematopoiesis by controlling the production, differentiation, and function of 2 related white cell populations of the blood, the granulocytes and the monocytes-macrophages. Its function is as follows. This CSF induces granulocytes, macrophages, mast cells, stem cells, erythroid cells, eosinophils and megakaryocytes. This is Interleukin-3 (IL3) from Hylobates lar (Lar gibbon).